The primary structure comprises 36 residues: Egg-laying hormone (36 aa).

Lysine amide is present on lysine 36.

It belongs to the molluscan ELH family. In terms of tissue distribution, bag cell neurons.

The protein localises to the secreted. Functionally, ELH acts as a neurotransmitter locally, upon neurons of the abdominal ganglion and as a hormone by diffusing into the circulating hemolymph and modulating the activity of other organs. It specifically causes contraction of smooth muscle in the ovotestis and expulsion of the egg string. This Aplysia fasciata (Mottled sea hare) protein is Egg-laying hormone.